A 729-amino-acid chain; its full sequence is Glutamine synthetase (729 aa).

The GS beta-grasp domain maps to 85-174 (THYTHWFQPL…IPTIFISYTG (90 aa)). The region spanning 179-615 (YKTPLLKALA…VLGDLAINHI (437 aa)) is the GS catalytic domain. Mg(2+) contacts are provided by E215, E217, E286, and E293. L-glutamate contacts are provided by residues 337 to 338 (NG) and G338. Residue H342 participates in Mg(2+) binding. ATP contacts are provided by S346 and R458. R458 contacts L-glutamate.

Belongs to the glutamine synthetase family. Homohexamer. The cofactor is Mg(2+).

It localises to the cytoplasm. The catalysed reaction is L-glutamate + NH4(+) + ATP = L-glutamine + ADP + phosphate + H(+). Inhibited by L-histidine (46%), L-arginine (38%) and L-methionine-DL-sulphoximine. The activity of this enzyme is not controlled by adenylation. In terms of biological role, catalyzes the ATP-dependent biosynthesis of glutamine from glutamate and ammonia. The protein is Glutamine synthetase of Bacteroides fragilis (strain YCH46).